The chain runs to 377 residues: Polar flagellin F (377 aa).

Coiled coils occupy residues Gln-98–Ser-131 and Asp-302–Thr-339.

Belongs to the bacterial flagellin family. As to quaternary structure, heteromer of multiple flagellin subunits including FlaA, FlaB/D, FlaC, FlaE and FlaF.

It is found in the secreted. It localises to the bacterial flagellum. In terms of biological role, flagellin is the subunit protein which polymerizes to form the filaments of bacterial flagella. The polypeptide is Polar flagellin F (flaF) (Vibrio parahaemolyticus serotype O3:K6 (strain RIMD 2210633)).